Here is a 119-residue protein sequence, read N- to C-terminus: Holo-[acyl-carrier-protein] synthase (119 aa).

Mg(2+) contacts are provided by aspartate 7 and glutamate 56.

This sequence belongs to the P-Pant transferase superfamily. AcpS family. Mg(2+) serves as cofactor.

Its subcellular location is the cytoplasm. The enzyme catalyses apo-[ACP] + CoA = holo-[ACP] + adenosine 3',5'-bisphosphate + H(+). Its function is as follows. Transfers the 4'-phosphopantetheine moiety from coenzyme A to a Ser of acyl-carrier-protein. The chain is Holo-[acyl-carrier-protein] synthase from Chlamydia trachomatis serovar D (strain ATCC VR-885 / DSM 19411 / UW-3/Cx).